The following is a 449-amino-acid chain: Exodeoxyribonuclease 7 large subunit (449 aa).

This sequence belongs to the XseA family. In terms of assembly, heterooligomer composed of large and small subunits.

It localises to the cytoplasm. It carries out the reaction Exonucleolytic cleavage in either 5'- to 3'- or 3'- to 5'-direction to yield nucleoside 5'-phosphates.. In terms of biological role, bidirectionally degrades single-stranded DNA into large acid-insoluble oligonucleotides, which are then degraded further into small acid-soluble oligonucleotides. This chain is Exodeoxyribonuclease 7 large subunit, found in Salmonella typhimurium (strain LT2 / SGSC1412 / ATCC 700720).